The sequence spans 516 residues: Signal recognition particle protein (516 aa).

GTP-binding positions include 108–115 (GLQGAGKT), 191–195 (DTAGR), and 249–252 (TKID). The segment at 383 to 405 (MTPEERENPDLLTPSRRRRIASG) is disordered.

The protein belongs to the GTP-binding SRP family. SRP54 subfamily. Part of the signal recognition particle protein translocation system, which is composed of SRP and FtsY.

Its subcellular location is the cytoplasm. It carries out the reaction GTP + H2O = GDP + phosphate + H(+). Its function is as follows. Involved in targeting and insertion of nascent membrane proteins into the cytoplasmic membrane. Binds to the hydrophobic signal sequence of the ribosome-nascent chain (RNC) as it emerges from the ribosomes. The SRP-RNC complex is then targeted to the cytoplasmic membrane where it interacts with the SRP receptor FtsY. The chain is Signal recognition particle protein from Streptococcus mutans serotype c (strain ATCC 700610 / UA159).